The chain runs to 255 residues: Triosephosphate isomerase (255 aa).

9 to 11 (NWK) serves as a coordination point for substrate. The Electrophile role is filled by H95. E167 serves as the catalytic Proton acceptor. Substrate contacts are provided by residues G173, S212, and 233–234 (GG).

Belongs to the triosephosphate isomerase family. Homodimer.

Its subcellular location is the cytoplasm. It catalyses the reaction D-glyceraldehyde 3-phosphate = dihydroxyacetone phosphate. The protein operates within carbohydrate biosynthesis; gluconeogenesis. Its pathway is carbohydrate degradation; glycolysis; D-glyceraldehyde 3-phosphate from glycerone phosphate: step 1/1. Functionally, involved in the gluconeogenesis. Catalyzes stereospecifically the conversion of dihydroxyacetone phosphate (DHAP) to D-glyceraldehyde-3-phosphate (G3P). The polypeptide is Triosephosphate isomerase (Salmonella agona (strain SL483)).